The primary structure comprises 412 residues: Inositol polyphosphate-5-phosphatase A (412 aa).

Cysteine 409 is lipidated: S-farnesyl cysteine. Residues 410-412 (VVQ) constitute a propeptide, removed in mature form.

It belongs to the inositol 1,4,5-trisphosphate 5-phosphatase type I family. Interacts with TASOR. Post-translationally, isoprenylation at Cys-409 is required for localization at the membrane.

Its subcellular location is the cell membrane. It is found in the cell projection. The protein localises to the dendrite. It carries out the reaction 1D-myo-inositol 1,4,5-trisphosphate + H2O = 1D-myo-inositol 1,4-bisphosphate + phosphate. The catalysed reaction is 1D-myo-inositol 1,3,4,5-tetrakisphosphate + H2O = 1D-myo-inositol 1,3,4-trisphosphate + phosphate. With respect to regulation, inhibited by EDTA and 2,3-bisphosphoglycerate. Phosphatase that specifically hydrolyzes the 5-phosphate of inositol 1,4,5-trisphosphate to inositol 1,4-bisphosphate, and inositol 1,3,4,5-tetrasphosphate to inositol 1,3,4-trisphosphate. Plays a crucial role in the survival of cerebellar Purkinje cells. The sequence is that of Inositol polyphosphate-5-phosphatase A (INPP5A) from Canis lupus familiaris (Dog).